Reading from the N-terminus, the 277-residue chain is MSSDRPVALVTGANKGIGFAIVRDLCRKFLGDVVLTARDESRGHEAVKQLQTEGLSPRFHQLDIDNPQSIRALRDFLLQEYGGLNVLVNNAGIAFKVVDPTPFHIQAEVTMKTNFFGTQDVCKELLPIIKPQGRVVNVSSSVSLRALKSCSPELQQKFRSETITEEELVGLMNKFIEDAKKGVHAKEGWPNSAYGVTKIGVTVLSRIYARKLNEERREDKILLNACCPGWVRTDMAGPKATKSPEEGAETPVYLALLPPGAEGPHGQFVQDKKVEPW.

N-acetylserine is present on Ser2. A Phosphoserine modification is found at Ser2. Residues 10–34, 63–64, and Asn90 contribute to the NADP(+) site; these read VTGA…GDVV and DI. Glutathione-binding positions include 95 to 97 and Gln106; that span reads FKV. Ser140 is a substrate binding site. 193 to 194 is a glutathione binding site; sequence AY. Tyr194 acts as the Proton acceptor in catalysis. NADP(+)-binding positions include 194 to 198 and 231 to 233; these read YGVTK and VRT. Lys239 carries the N6-1-carboxyethyl lysine modification. A disordered region spans residues 258–277; that stretch reads PPGAEGPHGQFVQDKKVEPW.

It belongs to the short-chain dehydrogenases/reductases (SDR) family. Monomer.

It is found in the cytoplasm. It carries out the reaction a secondary alcohol + NADP(+) = a ketone + NADPH + H(+). The enzyme catalyses prostaglandin F2alpha + NADP(+) = prostaglandin E2 + NADPH + H(+). It catalyses the reaction prostaglandin E1 + NADP(+) = 15-oxoprostaglandin E1 + NADPH + H(+). The catalysed reaction is menadione + NADPH + H(+) = menadiol + NADP(+). It carries out the reaction prostaglandin D2 + NADP(+) = 15-oxoprostaglandin D2 + NADPH + H(+). The enzyme catalyses prostaglandin E2 + NADP(+) = 15-oxoprostaglandin E2 + NADPH + H(+). It catalyses the reaction prostaglandin F2alpha + NADP(+) = 15-oxoprostaglandin F2alpha + NADPH + H(+). The catalysed reaction is daunorubicin + NADPH + H(+) = 13-dihydrodaunorubicin + NADP(+). It carries out the reaction S-nitrosoglutathione + NADPH + H(+) = S-(hydroxysulfenamide)glutathione + NADP(+). The enzyme catalyses a primary alcohol + NADP(+) = an aldehyde + NADPH + H(+). It catalyses the reaction cortisol + NADPH + H(+) = 20beta-dihydrocortisol + NADP(+). The catalysed reaction is corticosterone + NADPH + H(+) = 20beta-dihydrocorticosterone + NADP(+). NADPH-dependent reductase with broad substrate specificity. Catalyzes the reduction of a wide variety of carbonyl compounds including quinones, prostaglandins, menadione, plus various xenobiotics. Catalyzes the reduction of the antitumor anthracyclines doxorubicin and daunorubicin to the cardiotoxic compounds doxorubicinol and daunorubicinol. Can convert prostaglandin E to prostaglandin F2-alpha. Can bind glutathione, which explains its higher affinity for glutathione-conjugated substrates. Catalyzes the reduction of S-nitrosoglutathione. In addition, participates in the glucocorticoid metabolism by catalyzing the NADPH-dependent cortisol/corticosterone into 20beta-dihydrocortisol (20b-DHF) or 20beta-corticosterone (20b-DHB), which are weak agonists of NR3C1 and NR3C2 in adipose tissue. In Rattus norvegicus (Rat), this protein is Carbonyl reductase [NADPH] 1.